The chain runs to 1032 residues: Error-prone DNA polymerase (1032 aa).

It belongs to the DNA polymerase type-C family. DnaE2 subfamily.

It is found in the cytoplasm. The catalysed reaction is DNA(n) + a 2'-deoxyribonucleoside 5'-triphosphate = DNA(n+1) + diphosphate. In terms of biological role, DNA polymerase involved in damage-induced mutagenesis and translesion synthesis (TLS). It is not the major replicative DNA polymerase. This chain is Error-prone DNA polymerase, found in Hahella chejuensis (strain KCTC 2396).